We begin with the raw amino-acid sequence, 450 residues long: Enolase (450 aa).

Gln-173 provides a ligand contact to (2R)-2-phosphoglycerate. Glu-215 functions as the Proton donor in the catalytic mechanism. Mg(2+)-binding residues include Asp-254, Glu-308, and Asp-335. Residues Lys-360, Arg-389, Ser-390, and Lys-411 each coordinate (2R)-2-phosphoglycerate. The active-site Proton acceptor is Lys-360.

Belongs to the enolase family. Mg(2+) is required as a cofactor.

Its subcellular location is the cytoplasm. It localises to the secreted. The protein resides in the cell surface. The enzyme catalyses (2R)-2-phosphoglycerate = phosphoenolpyruvate + H2O. The protein operates within carbohydrate degradation; glycolysis; pyruvate from D-glyceraldehyde 3-phosphate: step 4/5. Catalyzes the reversible conversion of 2-phosphoglycerate (2-PG) into phosphoenolpyruvate (PEP). It is essential for the degradation of carbohydrates via glycolysis. The sequence is that of Enolase from Malacoplasma penetrans (strain HF-2) (Mycoplasma penetrans).